The chain runs to 475 residues: Ankyrin repeat, SAM and basic leucine zipper domain-containing protein 1 (475 aa).

Phosphoserine occurs at positions 17, 18, and 20. ANK repeat units lie at residues 45 to 74 (EKNETFKKALTTGDISLVQELLDSGISVES), 78 to 107 (YGWTPLMYAASVSNVELVRVLLDRGANASF), 110 to 144 (DKQTILITACSARGSEEQILKCVELLLSRNADPNV), 148 to 177 (RLMTPIMYAARDGHPQVVALLVAHGAEVNS), 181 to 210 (NGYTALTWAARQGHKNVVLKLLELGANKML), and 214 to 243 (DGKTPSEIAKRNKHLEIFNFLSLTLNPLEG). Positions 272–334 (SYTAFGDLEI…KILAALKELE (63 aa)) constitute an SAM domain.

In terms of assembly, interacts with DDX4, PIWIL1, RANBP9 and TDRD1.

Its subcellular location is the cytoplasm. In terms of biological role, plays a central role during spermatogenesis by repressing transposable elements and preventing their mobilization, which is essential for the germline integrity. Acts via the piRNA metabolic process, which mediates the repression of transposable elements during meiosis by forming complexes composed of piRNAs and Piwi proteins and governs the methylation and subsequent repression of transposons. Its association with pi-bodies suggests a participation in the primary piRNAs metabolic process. Required prior to the pachytene stage to facilitate the production of multiple types of piRNAs, including those associated with repeats involved in the regulation of retrotransposons. May act by mediating protein-protein interactions during germ cell maturation. The protein is Ankyrin repeat, SAM and basic leucine zipper domain-containing protein 1 (ASZ1) of Mustela putorius furo (European domestic ferret).